Here is a 206-residue protein sequence, read N- to C-terminus: Small ribosomal subunit protein uS4 (206 aa).

In terms of domain architecture, S4 RNA-binding spans 96–158; sequence GRLDNVVYRM…AKKQSRIKAA (63 aa).

Belongs to the universal ribosomal protein uS4 family. In terms of assembly, part of the 30S ribosomal subunit. Contacts protein S5. The interaction surface between S4 and S5 is involved in control of translational fidelity.

One of the primary rRNA binding proteins, it binds directly to 16S rRNA where it nucleates assembly of the body of the 30S subunit. In terms of biological role, with S5 and S12 plays an important role in translational accuracy. The sequence is that of Small ribosomal subunit protein uS4 from Vibrio cholerae serotype O1 (strain ATCC 39541 / Classical Ogawa 395 / O395).